Here is a 222-residue protein sequence, read N- to C-terminus: Ribonuclease S-3 (222 aa).

The first 22 residues, 1-22 (MVHVVMMVFLLIVLILCSSTVG), serve as a signal peptide directing secretion. Glutamine 31 contributes to the RNA binding site. Residues cysteine 37 and cysteine 44 are joined by a disulfide bond. N-linked (GlcNAc...) asparagine glycosylation is present at asparagine 40. RNA contacts are provided by residues histidine 55, 92–93 (NV), phenylalanine 102, 105–106 (KE), and 109–110 (KH). The active-site Proton donor is the histidine 55. A disulfide bridge connects residues cysteine 70 and cysteine 113. Residues glutamate 106 and lysine 109 contribute to the active site. Histidine 110 serves as the catalytic Proton acceptor. Residue asparagine 138 is glycosylated (N-linked (GlcNAc...) asparagine). Cystine bridges form between cysteine 177–cysteine 215 and cysteine 192–cysteine 203.

Belongs to the RNase T2 family. Post-translationally, N-linked core structure at Asn-138 contains xylose.

The catalysed reaction is a ribonucleotidyl-ribonucleotide-RNA + H2O = a 3'-end 3'-phospho-ribonucleotide-RNA + a 5'-end dephospho-ribonucleoside-RNA + H(+). Its function is as follows. Self-incompatibility (SI) is the inherited ability of a flowering plant to prevent self-fertilization by discriminating between self and non-self pollen during pollination. In many species, self-incompatibility is controlled by the single, multiallelic locus S. This chain is Ribonuclease S-3, found in Pyrus pyrifolia (Chinese pear).